Consider the following 427-residue polypeptide: C4-dicarboxylate TRAP transporter large permease protein DctM (427 aa).

A run of 13 helical transmembrane segments spans residues 2–22, 55–75, 91–111, 115–135, 138–158, 171–191, 216–236, 237–257, 274–294, 310–330, 335–355, 359–379, and 396–416; these read TILF…PIAV, TLLA…GGVA, GGLA…SGSS, VAAV…PQAF, GIVC…VMVV, FIAG…VIYI, ALWG…GAFT, PTEA…FVYR, LTIM…VLTT, LSPW…GNFM, IILI…IDPI, IIMV…LNLF, and ALPW…IPAV.

It belongs to the TRAP transporter large permease family. The complex comprises the extracytoplasmic solute receptor protein DctP, and the two transmembrane proteins DctQ and DctM.

The protein localises to the cell inner membrane. Part of the tripartite ATP-independent periplasmic (TRAP) transport system DctPQM involved in C4-dicarboxylates uptake. The chain is C4-dicarboxylate TRAP transporter large permease protein DctM from Pseudomonas aeruginosa (strain ATCC 15692 / DSM 22644 / CIP 104116 / JCM 14847 / LMG 12228 / 1C / PRS 101 / PAO1).